Reading from the N-terminus, the 1755-residue chain is Transposon Ty1-OR Gag-Pol polyprotein (1755 aa).

Composition is skewed to polar residues over residues 1–10 (MESQQLSNYP), 48–60 (TKAN…TPAS), and 127–152 (QSQF…GNTF). Disordered stretches follow at residues 1-93 (MESQ…MMTQ), 126-173 (PQSQ…RPPP), and 352-421 (GSRN…SKST). Positions 153 to 165 (TDSSSADSDMTST) are enriched in low complexity. The tract at residues 299–401 (NNGIHINNKV…NSKSKTARAH (103 aa)) is RNA-binding. Residues 402–418 (NVSTSNNSPSTDNDSIS) are compositionally biased toward low complexity. Position 416 is a phosphoserine (Ser-416). Asp-461 functions as the For protease activity; shared with dimeric partner in the catalytic mechanism. The interval 583-640 (NVHTSESTRKYPYPFIHRMLAHANAQTIRYSLKNNTITYFNESDVDWSSAIDYQCPDC) is integrase-type zinc finger-like. The Integrase catalytic domain maps to 660-835 (NSYEPFQYLH…AGLDISTLLP (176 aa)). Residues Asp-671 and Asp-736 each coordinate Mg(2+). Disordered stretches follow at residues 956-1087 (SKAV…ETEK), 1092-1111 (RSPS…NIVP), and 1130-1187 (DLPL…DNET). The span at 960 to 969 (SPTDSTPPST) shows a compositional bias: low complexity. Polar residues predominate over residues 1005–1015 (STPQISNIEST). The span at 1038–1053 (ESSHASKSKDFRHSDS) shows a compositional bias: basic and acidic residues. 2 stretches are compositionally biased toward polar residues: residues 1054–1082 (YSEN…QISD) and 1101–1111 (PENNSSHNIVP). Residues 1178–1212 (KKRSLEDNETEIKVSRDTWNTKNMRSLEPPRSKKR) carry the Bipartite nuclear localization signal motif. Residues 1338–1476 (NNYYITQLDI…DILGLEIKYQ (139 aa)) enclose the Reverse transcriptase Ty1/copia-type domain. Asp-1346, Asp-1427, Asp-1428, Asp-1610, Glu-1652, and Asp-1685 together coordinate Mg(2+). Positions 1610 to 1752 (DASYGNQPYY…IKTFKLLTNK (143 aa)) constitute an RNase H Ty1/copia-type domain.

The capsid protein forms a homotrimer, from which the VLPs are assembled. The protease is a homodimer, whose active site consists of two apposed aspartic acid residues. In terms of processing, initially, virus-like particles (VLPs) are composed of the structural unprocessed proteins Gag and Gag-Pol, and also contain the host initiator methionine tRNA (tRNA(i)-Met) which serves as a primer for minus-strand DNA synthesis, and a dimer of genomic Ty RNA. Processing of the polyproteins occurs within the particle and proceeds by an ordered pathway, called maturation. First, the protease (PR) is released by autocatalytic cleavage of the Gag-Pol polyprotein yielding capsid protein p45 and a Pol-p154 precursor protein. This cleavage is a prerequisite for subsequent processing of Pol-p154 at the remaining sites to release the mature structural and catalytic proteins. Maturation takes place prior to the RT reaction and is required to produce transposition-competent VLPs.

It localises to the cytoplasm. Its subcellular location is the nucleus. It carries out the reaction DNA(n) + a 2'-deoxyribonucleoside 5'-triphosphate = DNA(n+1) + diphosphate. It catalyses the reaction Endonucleolytic cleavage to 5'-phosphomonoester.. In terms of biological role, capsid protein (CA) is the structural component of the virus-like particle (VLP), forming the shell that encapsulates the retrotransposons dimeric RNA genome. The particles are assembled from trimer-clustered units and there are holes in the capsid shells that allow for the diffusion of macromolecules. CA also has nucleocapsid-like chaperone activity, promoting primer tRNA(i)-Met annealing to the multipartite primer-binding site (PBS), dimerization of Ty1 RNA and initiation of reverse transcription. Its function is as follows. The aspartyl protease (PR) mediates the proteolytic cleavages of the Gag and Gag-Pol polyproteins after assembly of the VLP. Functionally, reverse transcriptase/ribonuclease H (RT) is a multifunctional enzyme that catalyzes the conversion of the retro-elements RNA genome into dsDNA within the VLP. The enzyme displays a DNA polymerase activity that can copy either DNA or RNA templates, and a ribonuclease H (RNase H) activity that cleaves the RNA strand of RNA-DNA heteroduplexes during plus-strand synthesis and hydrolyzes RNA primers. The conversion leads to a linear dsDNA copy of the retrotransposon that includes long terminal repeats (LTRs) at both ends. Integrase (IN) targets the VLP to the nucleus, where a subparticle preintegration complex (PIC) containing at least integrase and the newly synthesized dsDNA copy of the retrotransposon must transit the nuclear membrane. Once in the nucleus, integrase performs the integration of the dsDNA into the host genome. In Saccharomyces cerevisiae (strain ATCC 204508 / S288c) (Baker's yeast), this protein is Transposon Ty1-OR Gag-Pol polyprotein (TY1B-OR).